The chain runs to 546 residues: Phosphatidylinositol 4-phosphate 5-kinase type-1 alpha (546 aa).

The region spanning 65-433 is the PIPK domain; that stretch reads TSSALKGAIQ…RFQRFMCNTV (369 aa). Lys87 is covalently cross-linked (Glycyl lysine isopeptide (Lys-Gly) (interchain with G-Cter in ubiquitin)). Residues 441 to 522 form a disordered region; that stretch reads PSPTKKFRSG…PGPSFSPAVG (82 aa). Residues 449–461 show a composition bias toward low complexity; it reads SGPSFSRRSGPSG. Residues 462–471 show a composition bias toward polar residues; that stretch reads NSCTPSQPTA. Residues 473 to 493 show a composition bias toward basic and acidic residues; that stretch reads GEHKAQVTTKAEVEPDIHLGR.

In terms of assembly, interacts with RAC1. Interacts with TUT1. Forms a complex with CDH1/E-cadherin, CTNNB1/beta-catenin and CTNND1 at the plasma membrane upon calcium stimulation. Found in a ternary complex with IRS1 and DGKZ in the absence of insulin stimulation. Interacts with DGKZ. Interacts with PIP4K2C; the interaction inhibits PIP5K1A kinase activity.

It localises to the cell membrane. It is found in the cytoplasm. The protein resides in the nucleus. Its subcellular location is the nucleus speckle. The protein localises to the cell projection. It localises to the ruffle. It is found in the lamellipodium. The enzyme catalyses a 1,2-diacyl-sn-glycero-3-phospho-(1D-myo-inositol 4-phosphate) + ATP = a 1,2-diacyl-sn-glycero-3-phospho-(1D-myo-inositol-4,5-bisphosphate) + ADP + H(+). It catalyses the reaction 1-octadecanoyl-2-(5Z,8Z,11Z,14Z)-eicosatetraenoyl-sn-glycero-3-phospho-1D-myo-inositol 4-phosphate + ATP = 1-octadecanoyl-2-(5Z,8Z,11Z,14Z)-eicosatetraenoyl-sn-glycero-3-phospho-1D-myo-inositol 4,5-bisphosphate + ADP + H(+). The catalysed reaction is 1,2-dihexadecanoyl-sn-glycero-3-phospho-(1D-myo-inositol-4-phosphate) + ATP = 1,2-dihexadecanoyl-sn-glycero-3-phospho-(1D-myo-inositol-4,5-bisphosphate) + ADP + H(+). It carries out the reaction 1-octadecanoyl-2-(9Z)-octadecenoyl-sn-glycero-3-phospho-1D-myo-inositol 4-phosphate + ATP = 1-octadecanoyl-2-(9Z)-octadecenoyl-sn-glycero-3-phospho-1D-myo-inositol 4,5-bisphosphate + ADP + H(+). The enzyme catalyses 1-octadecanoyl-2-(9Z)-octadecenoyl-sn-glycero-3-phospho-1D-myo-inositol + ATP = 1-octadecanoyl-2-(9Z)-octadecenoyl-sn-glycero-3-phospho-1D-myo-inositol 5-phosphate + ADP + H(+). It catalyses the reaction 1-octadecanoyl-2-(9Z,12Z)-octadecadienoyl-sn-glycero-3-phospho-1D-myo-inositol + ATP = 1-octadecanoyl-2-(9Z,12Z)-octadecadienoyl-sn-glycero-3-phospho-1D-myo-inositol 5-phosphate + ADP + H(+). The catalysed reaction is 1-octadecanoyl-2-(5Z,8Z,11Z,14Z-eicosatetraenoyl)-sn-glycero-3-phospho-(1D-myo-inositol) + ATP = 1-octadecanoyl-2-(5Z,8Z,11Z,14Z)-eicosatetraenoyl-sn-glycero-3-phospho-1D-myo-inositol 5-phosphate + ADP + H(+). It carries out the reaction 1,2-di-(9Z,12Z)-octadecadienoyl-sn-glycero-3-phospho-1D-myo-inositol + ATP = 1,2-di(9Z,12Z)-octadecadienoyl-sn-glycero-3-phospho-1D-myo-inositol 5-phosphate + ADP + H(+). Catalyzes the phosphorylation of phosphatidylinositol 4-phosphate (PtdIns(4)P/PI4P) to form phosphatidylinositol 4,5-bisphosphate (PtdIns(4,5)P2/PIP2), a lipid second messenger that regulates several cellular processes such as signal transduction, vesicle trafficking, actin cytoskeleton dynamics, cell adhesion, and cell motility. PtdIns(4,5)P2 can directly act as a second messenger or can be utilized as a precursor to generate other second messengers: inositol 1,4,5-trisphosphate (IP3), diacylglycerol (DAG) or phosphatidylinositol-3,4,5-trisphosphate (PtdIns(3,4,5)P3/PIP3). PIP5K1A-mediated phosphorylation of PtdIns(4)P is the predominant pathway for PtdIns(4,5)P2 synthesis. Can also use phosphatidylinositol (PtdIns) as substrate in vitro. Together with PIP5K1C, is required for phagocytosis, both enzymes regulating different types of actin remodeling at sequential steps. Promotes particle ingestion by activating the WAS GTPase-binding protein that induces Arp2/3 dependent actin polymerization at the nascent phagocytic cup. Together with PIP5K1B, is required, after stimulation by G-protein coupled receptors, for the synthesis of IP3 that will induce stable platelet adhesion. Recruited to the plasma membrane by the E-cadherin/beta-catenin complex where it provides the substrate PtdIns(4,5)P2 for the production of PtdIns(3,4,5)P3, IP3 and DAG, that will mobilize internal calcium and drive keratinocyte differentiation. Positively regulates insulin-induced translocation of SLC2A4 to the cell membrane in adipocytes. Together with PIP5K1C has a role during embryogenesis. Independently of its catalytic activity, is required for membrane ruffling formation, actin organization and focal adhesion formation during directional cell migration by controlling integrin-induced translocation of the small GTPase RAC1 to the plasma membrane. Also functions in the nucleus where it acts as an activator of TUT1 adenylyltransferase activity in nuclear speckles, thereby regulating mRNA polyadenylation of a select set of mRNAs. The chain is Phosphatidylinositol 4-phosphate 5-kinase type-1 alpha from Rattus norvegicus (Rat).